The sequence spans 503 residues: Variant surface glycoprotein ILTAT 1.3 (503 aa).

The N-terminal stretch at 1–29 is a signal peptide; sequence MTKAYENRMLLQALVLAAVLCTTHAEGTA. 2 cysteine pairs are disulfide-bonded: C42-C168 and C150-C206. N-linked (GlcNAc...) asparagine glycosylation is found at N419 and N432. The GPI-anchor amidated aspartate moiety is linked to residue D480. A propeptide spans 481 to 503 (removed in mature form); it reads SSFILNKQFALSVVSAAFAALLF.

The protein localises to the cell membrane. In terms of biological role, VSG forms a coat on the surface of the parasite. The trypanosome evades the immune response of the host by expressing a series of antigenically distinct VSGs from an estimated 1000 VSG genes. The polypeptide is Variant surface glycoprotein ILTAT 1.3 (Trypanosoma brucei brucei).